Consider the following 350-residue polypeptide: GTPase Obg (350 aa).

One can recognise an Obg domain in the interval 1–158 (MFIDSVKITL…RLVRLELKLI (158 aa)). The OBG-type G domain occupies 159–339 (ADVGLVGFPN…LKFMLLEEIK (181 aa)). Residues 165-172 (GFPNVGKS), 190-194 (FTTLT), 212-215 (DIPG), 280-283 (SKSD), and 320-322 (SSL) contribute to the GTP site. The Mg(2+) site is built by Ser172 and Thr192.

It belongs to the TRAFAC class OBG-HflX-like GTPase superfamily. OBG GTPase family. Monomer. Requires Mg(2+) as cofactor.

Its subcellular location is the cytoplasm. Functionally, an essential GTPase which binds GTP, GDP and possibly (p)ppGpp with moderate affinity, with high nucleotide exchange rates and a fairly low GTP hydrolysis rate. Plays a role in control of the cell cycle, stress response, ribosome biogenesis and in those bacteria that undergo differentiation, in morphogenesis control. The chain is GTPase Obg from Campylobacter jejuni subsp. jejuni serotype O:2 (strain ATCC 700819 / NCTC 11168).